Here is a 228-residue protein sequence, read N- to C-terminus: Aquaporin Z 1 (228 aa).

2 consecutive transmembrane segments (helical) span residues 9–29 and 34–54; these read FLGT…AAAF and IGLL…AYAV. Positions 63 to 65 match the NPA 1 motif; sequence NPA. The next 3 helical transmembrane spans lie at 82-102, 129-149, and 156-176; these read VGYI…LYVI, LTAA…IILG, and PVGF…LVSI. The NPA 2 motif lies at 184–186; it reads NPA. Residues 204-224 form a helical membrane-spanning segment; that stretch reads WLFWVAPLIGAVIAGIVWKIV.

The protein belongs to the MIP/aquaporin (TC 1.A.8) family. In terms of assembly, homotetramer.

It is found in the cell inner membrane. The catalysed reaction is H2O(in) = H2O(out). Channel that permits osmotically driven movement of water in both directions. It is involved in the osmoregulation and in the maintenance of cell turgor during volume expansion in rapidly growing cells. It mediates rapid entry or exit of water in response to abrupt changes in osmolarity. The chain is Aquaporin Z 1 from Rhizobium meliloti (strain 1021) (Ensifer meliloti).